The primary structure comprises 860 residues: Nuclear cap-binding protein complex subunit 1 (860 aa).

In terms of domain architecture, MIF4G spans 36–271 (CKDMLPDIRT…SNVKNALAND (236 aa)).

The protein belongs to the NCBP1 family. In terms of assembly, component of the nuclear cap-binding complex (CBC).

It is found in the nucleus. Its function is as follows. Component of the cap-binding complex (CBC) involved in the nuclear export of capped U snRNAs. The CBC complex is required for efficient pre-mRNA splicing through efficient commitment complex and spliceosome formation; and involved in rRNA processing at sites A0, A1 and A2. This Eremothecium gossypii (strain ATCC 10895 / CBS 109.51 / FGSC 9923 / NRRL Y-1056) (Yeast) protein is Nuclear cap-binding protein complex subunit 1 (CBC1).